Here is an 81-residue protein sequence, read N- to C-terminus: uncharacterized protein (81 aa).

This is an uncharacterized protein from Saccharomyces cerevisiae (strain ATCC 204508 / S288c) (Baker's yeast).